Here is a 192-residue protein sequence, read N- to C-terminus: UPF0312 protein PC1_2518 (192 aa).

An N-terminal signal peptide occupies residues 1–23; that stretch reads MLKKTLLSLTAVSMLASAGSALA.

This sequence belongs to the UPF0312 family. Type 1 subfamily.

It localises to the periplasm. This is UPF0312 protein PC1_2518 from Pectobacterium carotovorum subsp. carotovorum (strain PC1).